We begin with the raw amino-acid sequence, 285 residues long: Glutamate racemase (285 aa).

Substrate-binding positions include 28–29 and 60–61; these read DS and YG. The active-site Proton donor/acceptor is C92. 93 to 94 lines the substrate pocket; the sequence is NT. Residues R104 and 113-119 contribute to the UDP-N-acetyl-alpha-D-muramoyl-L-alanine site; that span reads GVVPAIK. Residue C204 is the Proton donor/acceptor of the active site. 205-206 contacts substrate; that stretch reads TH.

The protein belongs to the aspartate/glutamate racemases family. In terms of assembly, monomer.

It carries out the reaction L-glutamate = D-glutamate. It functions in the pathway cell wall biogenesis; peptidoglycan biosynthesis. Its activity is regulated as follows. The low basal catalytic activity in increased 1000-fold in the presence of UDP-MurNAc-L-Ala, the product of the preceding enzyme in the peptidoglycan biosynthesis. In terms of biological role, provides the (R)-glutamate required for cell wall biosynthesis. The protein is Glutamate racemase of Escherichia coli (strain K12).